The primary structure comprises 519 residues: Circadian clock oscillator protein KaiC (519 aa).

The KaiC 1 domain occupies M1–F247. ATP contacts are provided by G49, T50, G51, K52, T53, and L54. Residue T53 participates in Mg(2+) binding. E77 functions as the Proton acceptor in CI (KaiC 1) in the catalytic mechanism. S89 provides a ligand contact to ATP. A B-loop, required to bind KaiB and SasA region spans residues Q115–D122. The ATP site is built by K224, L225, R226, T228, H230, T240, and D241. The linker stretch occupies residues P248 to N260. One can recognise a KaiC 2 domain in the interval V261–S519. The ATP site is built by T290, G291, T292, G293, K294, T295, and L296. T295 is a binding site for Mg(2+). E318 is a binding site for Mg(2+). Catalysis depends on E318, which acts as the Proton acceptor in CII (KaiC 2). Position 331 (W331) interacts with ATP. S431 is subject to Phosphoserine; by autocatalysis. A Phosphothreonine; by autocatalysis modification is found at T432. 7 residues coordinate ATP: R451, K457, M458, R459, S461, H463, and K465. Residues R488–I497 are A-loop, interacts with KaiA.

This sequence belongs to the KaiC family. In terms of assembly, homohexamer resembling 2 stacked donuts with a central pore nearly blocked on one side; hexamerization is dependent on ATP-binding. Binds 12 ATP; 6 between each subunit in both layers. KaiB only binds to phospho-Ser-431 KaiC (not doubly phosphorylated KaiC). Complex formation between KaiB and KaiC is regulated by the phosphorylation state of KaiC and by an ATP hydrolysis-driven conformation change in the CI ring of KaiC; complex formation is slow. Slow complex formation is crucial for the timing of the circadian period. KaiB switches to a thioredoxin-like form called KaiB(fs) when bound to KaiC. The KaiABC complex composition changes during the circadian cycle to control KaiC phosphorylation. Complexes KaiC(6), KaiA(2-4):KaiC(6), KaiB(6):KaiC(6) and KaiC(6):KaiB(6):KaiA(12) are among the most important forms, many form cooperatively. Interacts directly with KaiB and SasA. The CI domain binds to KaiB and SasA; as they have a similar fold they compete for the same site on CI. CikA interacts with this protein in the clock complex. Binds to the C-terminus of KaiA via a coiled-coil structure. Forms KaiC(6):KaiB(1) and KaiC(6):KaiB(6) complexes. The cofactor is Mg(2+). Post-translationally, has a 4 step phosphorylation cycle; the autokinase acts first on Thr-432, then Ser-431. When Ser-431 is modified KaiC switches to an autophosphatase mode, acting first on phospho-Thr-432 then phospho-Ser-431. Phosphorylated and dephosphorylated on serine/threonine residues by autocatalysis. Unphosphorylated, mono- and di-phosphorylated forms exist. The phosphorylated form correlates with clock speed. The presence of KaiA increases phosphorylation and stabilizes these forms. Phosphorylated on serine and threonine residues by autocatalysis. Has a 4 step phosphorylation cycle; the autokinase acts first on Thr-432, then Ser-431. When Ser-431 is modified KaiC switches to an autophosphatase mode, acting first on phospho-Thr-432 then phospho-Ser-431.

The catalysed reaction is L-seryl-[protein] + ATP = O-phospho-L-seryl-[protein] + ADP + H(+). It carries out the reaction L-threonyl-[protein] + ATP = O-phospho-L-threonyl-[protein] + ADP + H(+). The enzyme catalyses ATP + H2O = ADP + phosphate + H(+). Interaction with KaiA stimulates autophosphorylation, KaiC interaction with KaiB sequesters KaiA, preventing it stimulating the KaiC kinase, leading to autodephosphorylation. A KaiA dimer is sufficient to enhance KaiC phosphorylation. Interaction of KaiA with the A-loop stimulates autokinase activity. Its function is as follows. The KaiABC oscillator complex constitutes the main circadian regulator in cyanobacteria. Complex composition changes during the circadian cycle to control KaiC phosphorylation; KaiA stimulates KaiC autophosphorylation, while KaiB sequesters KaiA, leading to KaiC autodephosphorylation. The Kai complex controls chromosome condensation, leading to a transcription accessible chromosome during the first half of the circadian cycle and a compact, less transcription-accessible chromosome during the latter half. Clock output pathways impact the RpaA transcriptional regulator. Circadian oscillations can be generated in vitro by incubating KaiA, KaiB and KaiC with 1 mM ATP. The cycle is self-sustainable for at least 3 cycles and resistant to temperature changes. Mutations in KaiC alone prolong or reduce the circadian rhythm. A very robust clock is reconstituted with KaiA, KaiB, KaiC, SasA, CikA and RpaA; output is measured by transcription from an appropriate reporter. The level of KaiC phosphorylation and KaiC ATPase activity represent the key features of the biochemical oscillator. KaiA homodimer binding to the KaiC CII domain stimulates KaiC's ATPase activity and forms KaiA(2-4):KaiC(6) complexes, which stimulate KaiC autophosphorylation first on Thr-432 then Ser-431. Phospho-Ser-431-KaiC accumulation triggers binding of KaiB to CI to form the KaiB(6):KaiC(6) complex, leading to changes in the output regulators CikA and SasA. KaiB(6):KaiC(6) formation exposes a site for KaiA binding that sequesters KaiA from the CII domain, making the KaiC(6):KaiB(6):KaiA(12) complex that results in KaiC autodephosphorylation. Complete dephosphorylation of KaiC leads to dissociation of KaiA(2):KaiB(1), completing 1 cycle of the Kai oscillator. Functionally, has a weak, temperature-independent ATPase activity (about 15 molecules of ATP per day); the addition of KaiA and KaiB increases activity slightly and makes the activity oscillate with a circadian period in vitro for over 60 hours. ATPase activity defines the circadian period. The phosphorylation state of KaiC modulates its ATPase activity and effects KaiB binding. In terms of biological role, there are several clock output pathways; SasA/RpaA, CikA/RpaA and LabA. KaiC enhances the autophosphorylation activity of SasA, which then transfers its phosphate group to RpaA to activate it. Phosphotransfer is maximal when KaiC phosphorylation is active during the circadian cycle. KaiB and KaiC together enhance the phosphatase activity of CikA on phospho-RpaA. Its function is as follows. KaiC is important for metabolic partitioning during the dark to light shift, modulating the balance between the Calvin cycle and oxidative pentose phosphate pathway under natural growth conditions. This Synechococcus elongatus (strain ATCC 33912 / PCC 7942 / FACHB-805) (Anacystis nidulans R2) protein is Circadian clock oscillator protein KaiC.